The chain runs to 1107 residues: MAKMEVKSSLLDNMIGVGDMVLLEPLNEETFIDNLKKRFDHNEIYTYIGSVVISVNPYRSLPIYSPEKVEDYRNRNFYELSPHIFALSDEAYRSLRDQDKDQCILITGESGAGKTEASKLVMSYVAAVCGKGAEVNQVKEQLLQSNPVLEAFGNAKTVRNDNSSRFGKYMDIEFDFKGDPLGGVISNYLLEKSRVVKQPRGERNFHVFYQLLSGASEELLYKLKLERDFSRYNYLSLDSAKVNGVDDAANFRTVRNAMQIVGFLDHEAEAVLEVVAAVLKLGNIEFKPESRVNGLDESKIKDKNELKEICELTSIDQVVLERAFSFRTVEAKQEKVSTTLNVAQAYYARDALAKNLYSRLFSWLVNRINESIKAQTKVRKKVMGVLDIYGFEIFEDNSFEQFIINYCNEKLQQIFIELTLKEEQEEYIREDIEWTHIDYFNNAIICDLIENNTNGILAMLDEECLRPGTVTDETFLEKLNQVCATHQHFESRMSKCSRFLNDTTLPHSCFRIQHYAGKVLYQVEGFVDKNNDLLYRDLSQAMWKAGHSLIKSLFPEGNPAKVNLKRPPTAGSQFKASVATLMRNLQTKNPNYIRCIKPNDKKAAHIFNESLVCHQIRYLGLLENVRVRRAGYAFRQAYEPCLERYKMLCKQTWPHWKGPARSGVEVLFNELEIPVEEHSFGRSKIFIRNPRTLFQLEDLRKQRLEDLATLIQKIYRGWKCRTHFLLMKRSQVVIAAWYRRYAQQKRYQQIKSSALVIQSYIRGWKARKILRELKHQKRCKEAATTIAAYWHGTQARRELKRLKEEARRKHAVAVIWAYWLGLKVRREYRKFFRANAGKKIYEFTLQRIVQKYLLEMKNKMPSLSPIDKNWPSRPYLFLDSTHKELKRIFHLWRCKKYRDQFTDQQKLIYEEKLEASELFKDKKALYPSSVGQPFQGAYLEINKNPKYKKLKDAIEEKIIIAEVVNKINRANGKSTSRIFLLTNNNLLLADQKSGQIKSEVPLVDVTKVSMSSQNDGFFAVHLKEGSEAASKGDFLFSSDHLIEMATKLYRTTLSQTKQKLNIEISDEFLVQFRQDKVCVKFIQGNQKNGSVPTCKRKNNRLLEVAVP.

Residues 15 to 701 form the Myosin motor domain; it reads IGVGDMVLLE…TLFQLEDLRK (687 aa). A Phosphoserine modification is found at serine 60. 108–115 contributes to the ATP binding site; sequence GESGAGKT. Lysine 287 is covalently cross-linked (Glycyl lysine isopeptide (Lys-Gly) (interchain with G-Cter in SUMO1); alternate). Residue lysine 287 forms a Glycyl lysine isopeptide (Lys-Gly) (interchain with G-Cter in SUMO2); alternate linkage. Residues 592–599 are actin-binding; the sequence is YIRCIKPN. IQ domains are found at residues 704–727, 728–749, 750–778, 780–807, and 808–837; these read LEDL…FLLM, KRSQ…RYQQ, IKSS…HQKR, KEAA…EEAR, and RKHA…ANAG. In terms of domain architecture, TH1 spans 923–1107; sequence KALYPSSVGQ…NNRLLEVAVP (185 aa).

Belongs to the TRAFAC class myosin-kinesin ATPase superfamily. Myosin family. In terms of tissue distribution, prominent expression is seen in the brain, lung and liver. It is also expressed in the heart and testis. A high level expression is seen in virtually all neurons (but not glia) in the postnatal and adult mouse brain and in neuroblasts of the cerebellar external granular layer.

Functionally, motor protein that may participate in process critical to neuronal development and function such as cell migration, neurite outgrowth and vesicular transport. This is Unconventional myosin-Ib (Myo1b) from Mus musculus (Mouse).